The following is a 139-amino-acid chain: MGREKKQEYALLTAWGASFIATLGSLYFSEIMKFEPCVLCWYQRIFMYPFVLWLGIAVAKKDYRIASYSLPIASIGACISLYHYAIQKVAAFSAAGAACGRVPCTGEYINWFGFVTIPFLALIGFITIAVCSFIVIKNK.

Residues 8 to 27 (EYALLTAWGASFIATLGSLY) form a helical membrane-spanning segment. C37 and C40 form a disulfide bridge. 2 helical membrane-spanning segments follow: residues 42-61 (YQRI…VAKK) and 68-85 (YSLP…YHYA). Cysteines 99 and 104 form a disulfide. Residues 113 to 135 (GFVTIPFLALIGFITIAVCSFIV) form a helical membrane-spanning segment.

It belongs to the DsbB family. BdbC subfamily.

It is found in the cell membrane. In terms of biological role, required for disulfide bond formation in some proteins. This is Probable disulfide formation protein C from Bacillus cereus (strain ATCC 14579 / DSM 31 / CCUG 7414 / JCM 2152 / NBRC 15305 / NCIMB 9373 / NCTC 2599 / NRRL B-3711).